The primary structure comprises 224 residues: ATP-dependent dethiobiotin synthetase BioD (224 aa).

Gly-14–Val-19 contacts ATP. Thr-18 is a Mg(2+) binding site. The active site involves Lys-39. Position 43 (Ser-43) interacts with substrate. ATP-binding positions include Asp-56, Glu-117 to Gly-120, and Asn-177 to Glu-178. 2 residues coordinate Mg(2+): Asp-56 and Glu-117.

Belongs to the dethiobiotin synthetase family. Homodimer. The cofactor is Mg(2+).

It localises to the cytoplasm. It catalyses the reaction (7R,8S)-7,8-diammoniononanoate + CO2 + ATP = (4R,5S)-dethiobiotin + ADP + phosphate + 3 H(+). It functions in the pathway cofactor biosynthesis; biotin biosynthesis; biotin from 7,8-diaminononanoate: step 1/2. Catalyzes a mechanistically unusual reaction, the ATP-dependent insertion of CO2 between the N7 and N8 nitrogen atoms of 7,8-diaminopelargonic acid (DAPA, also called 7,8-diammoniononanoate) to form a ureido ring. This is ATP-dependent dethiobiotin synthetase BioD from Xanthomonas campestris pv. campestris (strain 8004).